The chain runs to 496 residues: Fizzy-related protein homolog (496 aa).

Disordered stretches follow at residues 28-51, 64-88, and 105-166; these read RRTLTPASSPVSSPSKHGDRFIPS, INENEKSPSQNRKAKDATSDNGKDG, and EKVQ…SPRK. T32 carries the post-translational modification Phosphothreonine. A compositionally biased stretch (polar residues) spans 32–42; it reads TPASSPVSSPS. Phosphoserine is present on S36. Residues 47–52 are involved in APC/FZR1 E3 ubiquitin-protein ligase complex activity; sequence RFIPSR. At K69 the chain carries N6-acetyllysine. 2 stretches are compositionally biased toward basic and acidic residues: residues 76-86 and 106-126; these read KAKDATSDNGK and KVQDPQTEDRRLQPSTPEKKG. Residues S133, S138, S146, and S151 each carry the phosphoserine modification. Over residues 146–160 the composition is skewed to polar residues; sequence SPYSLSPVSNKSQKL. An N6-acetyllysine modification is found at K159. 7 WD repeats span residues 182 to 222, 227 to 266, 269 to 306, 311 to 350, 353 to 395, 397 to 438, and 441 to 480; these read PELQ…VTRL, VEGDSVTSVGWSERGNLVAVGTHKGFVQIWDAAAGKKLSM, GHTARVGALAWNAEQLSSGSRDRMILQRDIRTPPLQSE, GHRQEVCGLKWSTDHQLLASGGNDNKLLVWNHSSLSPVQQ, EHLA…PLQC, DTGS…QVAK, and GHSYRVLYLAMSPDGEAIVTGAGDETLRFWNVFSKTRSTK.

Belongs to the WD repeat CDC20/Fizzy family. In terms of assembly, the unphosphorylated form interacts with APC/C during mitosis. Interacts with NINL. Interacts (in complex with the anaphase promoting complex APC) with MAD2L2; inhibits FZR1-mediated APC/C activation. Interacts with SIRT2 and USP37. Interacts (via WD repeats) with MAK. Interacts with RBBP8/CtIP; this interaction leads to RBBP8 proteasomal degradation. Interacts with HECW2. Interacts with SASS6; the interaction is regulated by CENATAC and leads to SASS6 proteasomal degradation. Interacts (via N-terminus) with CCNF. Interacts with CDC6. Interacts with TK1 (via the KEN box). Post-translationally, acetylated. Deacetylated by SIRT2 at Lys-69 and Lys-159; deacetylation enhances the interaction of FZR1 with CDC27, leading to activation of anaphase promoting complex/cyclosome (APC/C). Following DNA damage, it is dephosphorylated by CDC14B in G2 phase, leading to its reassociation with the APC/C, and allowing an efficient G2 DNA damage checkpoint. Phosphorylated by MAK. In terms of processing, ubiquitinated by the SCF(CCNF) E3 ubiquitin-protein ligase complex; leading to its degradation by the proteasome. As to expression, isoform 2 is expressed at high levels in heart, liver, spleen and some cancer cell lines whereas isoform 3 is expressed only at low levels in these tissues.

Its subcellular location is the nucleus. The protein resides in the cytoplasm. It participates in protein modification; protein ubiquitination. Its function is as follows. Substrate-specific adapter for the anaphase promoting complex/cyclosome (APC/C) E3 ubiquitin-protein ligase complex. Associates with the APC/C in late mitosis, in replacement of CDC20, and activates the APC/C during anaphase and telophase. The APC/C remains active in degrading substrates to ensure that positive regulators of the cell cycle do not accumulate prematurely. At the G1/S transition FZR1 is phosphorylated, leading to its dissociation from the APC/C. Following DNA damage, it is required for the G2 DNA damage checkpoint: its dephosphorylation and reassociation with the APC/C leads to the ubiquitination of PLK1, preventing entry into mitosis. Acts as an adapter for APC/C to target the DNA-end resection factor RBBP8/CtIP for ubiquitination and subsequent proteasomal degradation. Through the regulation of RBBP8/CtIP protein turnover, may play a role in DNA damage response, favoring DNA double-strand repair through error-prone non-homologous end joining (NHEJ) over error-free, RBBP8-mediated homologous recombination (HR). The protein is Fizzy-related protein homolog of Homo sapiens (Human).